A 209-amino-acid chain; its full sequence is Thymidylate kinase (209 aa).

An ATP-binding site is contributed by 10–17 (GLDGAGKS).

The protein belongs to the thymidylate kinase family.

It carries out the reaction dTMP + ATP = dTDP + ADP. Functionally, phosphorylation of dTMP to form dTDP in both de novo and salvage pathways of dTTP synthesis. In Francisella tularensis subsp. novicida (strain U112), this protein is Thymidylate kinase.